Consider the following 96-residue polypeptide: Small ribosomal subunit protein bS21 (96 aa).

The disordered stretch occupies residues 52 to 96 (RRARKQARKTAIREGLIAAPKPKARPVSPRRPAAPAPASSPVGAA). Low complexity predominate over residues 69-96 (AAPKPKARPVSPRRPAAPAPASSPVGAA).

Belongs to the bacterial ribosomal protein bS21 family.

The protein is Small ribosomal subunit protein bS21 of Methylobacterium nodulans (strain LMG 21967 / CNCM I-2342 / ORS 2060).